Consider the following 955-residue polypeptide: Glycine dehydrogenase (decarboxylating) (955 aa).

The residue at position 705 (Lys-705) is an N6-(pyridoxal phosphate)lysine.

It belongs to the GcvP family. As to quaternary structure, the glycine cleavage system is composed of four proteins: P, T, L and H. It depends on pyridoxal 5'-phosphate as a cofactor.

It catalyses the reaction N(6)-[(R)-lipoyl]-L-lysyl-[glycine-cleavage complex H protein] + glycine + H(+) = N(6)-[(R)-S(8)-aminomethyldihydrolipoyl]-L-lysyl-[glycine-cleavage complex H protein] + CO2. Its function is as follows. The glycine cleavage system catalyzes the degradation of glycine. The P protein binds the alpha-amino group of glycine through its pyridoxal phosphate cofactor; CO(2) is released and the remaining methylamine moiety is then transferred to the lipoamide cofactor of the H protein. The sequence is that of Glycine dehydrogenase (decarboxylating) from Aliivibrio fischeri (strain ATCC 700601 / ES114) (Vibrio fischeri).